A 411-amino-acid polypeptide reads, in one-letter code: Peptidase T (411 aa).

Histidine 79 is a binding site for Zn(2+). Aspartate 81 is an active-site residue. Aspartate 142 is a Zn(2+) binding site. The active-site Proton acceptor is glutamate 176. Residues glutamate 177, aspartate 199, and histidine 381 each contribute to the Zn(2+) site.

This sequence belongs to the peptidase M20B family. Requires Zn(2+) as cofactor.

Its subcellular location is the cytoplasm. It catalyses the reaction Release of the N-terminal residue from a tripeptide.. Its function is as follows. Cleaves the N-terminal amino acid of tripeptides. This Exiguobacterium sibiricum (strain DSM 17290 / CCUG 55495 / CIP 109462 / JCM 13490 / 255-15) protein is Peptidase T.